The primary structure comprises 92 residues: Small ribosomal subunit protein uS19c (92 aa).

Belongs to the universal ribosomal protein uS19 family.

Its subcellular location is the plastid. The protein resides in the chloroplast. Protein S19 forms a complex with S13 that binds strongly to the 16S ribosomal RNA. In Lactuca sativa (Garden lettuce), this protein is Small ribosomal subunit protein uS19c.